We begin with the raw amino-acid sequence, 265 residues long: Sulfur carrier protein FdhD (265 aa).

C107 (cysteine persulfide intermediate) is an active-site residue.

This sequence belongs to the FdhD family.

Its subcellular location is the cytoplasm. Required for formate dehydrogenase (FDH) activity. Acts as a sulfur carrier protein that transfers sulfur from IscS to the molybdenum cofactor prior to its insertion into FDH. This chain is Sulfur carrier protein FdhD, found in Staphylococcus aureus (strain JH9).